The sequence spans 152 residues: SsrA-binding protein (152 aa).

Belongs to the SmpB family.

The protein localises to the cytoplasm. Its function is as follows. Required for rescue of stalled ribosomes mediated by trans-translation. Binds to transfer-messenger RNA (tmRNA), required for stable association of tmRNA with ribosomes. tmRNA and SmpB together mimic tRNA shape, replacing the anticodon stem-loop with SmpB. tmRNA is encoded by the ssrA gene; the 2 termini fold to resemble tRNA(Ala) and it encodes a 'tag peptide', a short internal open reading frame. During trans-translation Ala-aminoacylated tmRNA acts like a tRNA, entering the A-site of stalled ribosomes, displacing the stalled mRNA. The ribosome then switches to translate the ORF on the tmRNA; the nascent peptide is terminated with the 'tag peptide' encoded by the tmRNA and targeted for degradation. The ribosome is freed to recommence translation, which seems to be the essential function of trans-translation. The protein is SsrA-binding protein of Rickettsia typhi (strain ATCC VR-144 / Wilmington).